We begin with the raw amino-acid sequence, 338 residues long: Ketol-acid reductoisomerase (NADP(+)) (338 aa).

The region spanning 1–181 (MRVFYDKDCD…GGGRTGIIET (181 aa)) is the KARI N-terminal Rossmann domain. Residues 24-27 (YGSQ), Arg-47, Ser-50, Thr-52, and 82-85 (DEFQ) each bind NADP(+). His-107 is a catalytic residue. Gly-133 contacts NADP(+). Residues 182-327 (TFKDETETDL…EKLRAMMPWI (146 aa)) enclose the KARI C-terminal knotted domain. Residues Asp-190, Glu-194, Glu-226, and Glu-230 each coordinate Mg(2+). Residue Ser-251 participates in substrate binding.

The protein belongs to the ketol-acid reductoisomerase family. Mg(2+) is required as a cofactor.

The catalysed reaction is (2R)-2,3-dihydroxy-3-methylbutanoate + NADP(+) = (2S)-2-acetolactate + NADPH + H(+). It carries out the reaction (2R,3R)-2,3-dihydroxy-3-methylpentanoate + NADP(+) = (S)-2-ethyl-2-hydroxy-3-oxobutanoate + NADPH + H(+). It functions in the pathway amino-acid biosynthesis; L-isoleucine biosynthesis; L-isoleucine from 2-oxobutanoate: step 2/4. Its pathway is amino-acid biosynthesis; L-valine biosynthesis; L-valine from pyruvate: step 2/4. Its function is as follows. Involved in the biosynthesis of branched-chain amino acids (BCAA). Catalyzes an alkyl-migration followed by a ketol-acid reduction of (S)-2-acetolactate (S2AL) to yield (R)-2,3-dihydroxy-isovalerate. In the isomerase reaction, S2AL is rearranged via a Mg-dependent methyl migration to produce 3-hydroxy-3-methyl-2-ketobutyrate (HMKB). In the reductase reaction, this 2-ketoacid undergoes a metal-dependent reduction by NADPH to yield (R)-2,3-dihydroxy-isovalerate. The sequence is that of Ketol-acid reductoisomerase (NADP(+)) from Pseudomonas paraeruginosa (strain DSM 24068 / PA7) (Pseudomonas aeruginosa (strain PA7)).